Reading from the N-terminus, the 81-residue chain is MSHSVKIYDTCIGCTQCVRACPTDVLEMIPWDGCKAKQIASAPRTEDCVGCKRCESACPTDFLSVRVYLGNETTRSMGLPY.

2 consecutive 4Fe-4S ferredoxin-type domains span residues 2 to 31 (SHSV…MIPW) and 39 to 68 (IASA…VRVY). 8 residues coordinate [4Fe-4S] cluster: Cys-11, Cys-14, Cys-17, Cys-21, Cys-48, Cys-51, Cys-54, and Cys-58.

The eukaryotic PSI reaction center is composed of at least 11 subunits. The cofactor is [4Fe-4S] cluster.

Its subcellular location is the plastid. The protein localises to the chloroplast thylakoid membrane. It carries out the reaction reduced [plastocyanin] + hnu + oxidized [2Fe-2S]-[ferredoxin] = oxidized [plastocyanin] + reduced [2Fe-2S]-[ferredoxin]. In terms of biological role, apoprotein for the two 4Fe-4S centers FA and FB of photosystem I (PSI); essential for photochemical activity. FB is the terminal electron acceptor of PSI, donating electrons to ferredoxin. The C-terminus interacts with PsaA/B/D and helps assemble the protein into the PSI complex. Required for binding of PsaD and PsaE to PSI. PSI is a plastocyanin-ferredoxin oxidoreductase, converting photonic excitation into a charge separation, which transfers an electron from the donor P700 chlorophyll pair to the spectroscopically characterized acceptors A0, A1, FX, FA and FB in turn. The sequence is that of Photosystem I iron-sulfur center from Acorus calamus (Sweet flag).